The sequence spans 449 residues: Probable glycine dehydrogenase (decarboxylating) subunit 1 (449 aa).

This sequence belongs to the GcvP family. N-terminal subunit subfamily. The glycine cleavage system is composed of four proteins: P, T, L and H. In this organism, the P 'protein' is a heterodimer of two subunits.

It carries out the reaction N(6)-[(R)-lipoyl]-L-lysyl-[glycine-cleavage complex H protein] + glycine + H(+) = N(6)-[(R)-S(8)-aminomethyldihydrolipoyl]-L-lysyl-[glycine-cleavage complex H protein] + CO2. Functionally, the glycine cleavage system catalyzes the degradation of glycine. The P protein binds the alpha-amino group of glycine through its pyridoxal phosphate cofactor; CO(2) is released and the remaining methylamine moiety is then transferred to the lipoamide cofactor of the H protein. In Pyrococcus horikoshii (strain ATCC 700860 / DSM 12428 / JCM 9974 / NBRC 100139 / OT-3), this protein is Probable glycine dehydrogenase (decarboxylating) subunit 1.